We begin with the raw amino-acid sequence, 88 residues long: Small ribosomal subunit protein bS20 (88 aa).

The interval 1–25 (MANSAQARKRVRQNNTRRQHAASQR) is disordered. Over residues 7–20 (ARKRVRQNNTRRQH) the composition is skewed to basic residues.

Belongs to the bacterial ribosomal protein bS20 family.

In terms of biological role, binds directly to 16S ribosomal RNA. This is Small ribosomal subunit protein bS20 from Psychrobacter sp. (strain PRwf-1).